The following is a 238-amino-acid chain: Ribonuclease 3 (238 aa).

An RNase III domain is found at 9-141 (LIDFMEKIGY…VVAAVYIDGG (133 aa)). Position 54 (Glu54) interacts with Mg(2+). Asp58 is a catalytic residue. Residues Asp127 and Glu130 each contribute to the Mg(2+) site. Glu130 is a catalytic residue. Positions 168 to 237 (DYKTSLQEIT…ARRAIEKLKG (70 aa)) constitute a DRBM domain.

This sequence belongs to the ribonuclease III family. In terms of assembly, homodimer. Mg(2+) is required as a cofactor.

The protein resides in the cytoplasm. The enzyme catalyses Endonucleolytic cleavage to 5'-phosphomonoester.. Functionally, digests double-stranded RNA. Involved in the processing of primary rRNA transcript to yield the immediate precursors to the large and small rRNAs (23S and 16S). Processes some mRNAs, and tRNAs when they are encoded in the rRNA operon. Processes pre-crRNA and tracrRNA of type II CRISPR loci if present in the organism. The sequence is that of Ribonuclease 3 from Pseudothermotoga lettingae (strain ATCC BAA-301 / DSM 14385 / NBRC 107922 / TMO) (Thermotoga lettingae).